A 756-amino-acid polypeptide reads, in one-letter code: 5-methyltetrahydropteroyltriglutamate--homocysteine methyltransferase (756 aa).

Residues 16–19 and Lys112 contribute to the 5-methyltetrahydropteroyltri-L-glutamate site; that span reads RELK. L-homocysteine contacts are provided by residues 432-434 and Glu485; that span reads IGS. Residues 432–434 and Glu485 contribute to the L-methionine site; that span reads IGS. 5-methyltetrahydropteroyltri-L-glutamate contacts are provided by residues 516 to 517 and Trp562; that span reads RC. Asp600 provides a ligand contact to L-homocysteine. Asp600 is a binding site for L-methionine. Position 606 (Glu606) interacts with 5-methyltetrahydropteroyltri-L-glutamate. Residues His642, Cys644, and Glu666 each contribute to the Zn(2+) site. His695 functions as the Proton donor in the catalytic mechanism. Cys727 lines the Zn(2+) pocket.

Belongs to the vitamin-B12 independent methionine synthase family. It depends on Zn(2+) as a cofactor.

It carries out the reaction 5-methyltetrahydropteroyltri-L-glutamate + L-homocysteine = tetrahydropteroyltri-L-glutamate + L-methionine. It participates in amino-acid biosynthesis; L-methionine biosynthesis via de novo pathway; L-methionine from L-homocysteine (MetE route): step 1/1. Functionally, catalyzes the transfer of a methyl group from 5-methyltetrahydrofolate to homocysteine resulting in methionine formation. This chain is 5-methyltetrahydropteroyltriglutamate--homocysteine methyltransferase, found in Haemophilus influenzae (strain ATCC 51907 / DSM 11121 / KW20 / Rd).